We begin with the raw amino-acid sequence, 71 residues long: DNA gyrase inhibitor YacG (71 aa).

Residues cysteine 8, cysteine 11, cysteine 27, and cysteine 31 each coordinate Zn(2+). Residues 48 to 71 are disordered; that stretch reads VVEDDDLPPDAPGGESGGASGRLN. Residues 61–71 are compositionally biased toward gly residues; that stretch reads GESGGASGRLN.

The protein belongs to the DNA gyrase inhibitor YacG family. Interacts with GyrB. Requires Zn(2+) as cofactor.

Functionally, inhibits all the catalytic activities of DNA gyrase by preventing its interaction with DNA. Acts by binding directly to the C-terminal domain of GyrB, which probably disrupts DNA binding by the gyrase. The polypeptide is DNA gyrase inhibitor YacG (Ralstonia nicotianae (strain ATCC BAA-1114 / GMI1000) (Ralstonia solanacearum)).